The sequence spans 148 residues: Glutamyl-tRNA(Gln) amidotransferase subunit C, mitochondrial (148 aa).

It belongs to the GatC family. Subunit of the heterotrimeric GatCAB amidotransferase (AdT) complex, composed of A, B and C subunits.

The protein resides in the mitochondrion. The enzyme catalyses L-glutamyl-tRNA(Gln) + L-glutamine + ATP + H2O = L-glutaminyl-tRNA(Gln) + L-glutamate + ADP + phosphate + H(+). In terms of biological role, allows the formation of correctly charged Gln-tRNA(Gln) through the transamidation of misacylated Glu-tRNA(Gln) in the mitochondria. The reaction takes place in the presence of glutamine and ATP through an activated gamma-phospho-Glu-tRNA(Gln). This is Glutamyl-tRNA(Gln) amidotransferase subunit C, mitochondrial from Drosophila yakuba (Fruit fly).